The primary structure comprises 764 residues: Thyrotropin receptor (764 aa).

The N-terminal stretch at 1 to 21 is a signal peptide; the sequence is MRPTPLLRLALLLVLPSSLWG. Over 22–413 the chain is Extracellular; sequence ERCPSPPCEC…EFNPCEDIMG (392 aa). A disulfide bond links C31 and C41. One copy of the LRR 1 repeat lies at 51–74; sequence PPSTQTLKFIETHLKTIPSRAFSN. N-linked (GlcNAc...) asparagine glycans are attached at residues N77 and N99. 5 LRR repeats span residues 125 to 150, 152 to 174, 176 to 199, 201 to 223, and 225 to 248; these read LPLLKFLGIFNTGLRVFPDLTKIYST, VFFILEITDNPYMTSVPANAFQG, SNETLTLKLYNNGFTSIQGHAFNG, KLDAVYLNKNKYLTVIDQDAFAG, and YSGPTLLDISYTSVTALPSKGLEH. 2 N-linked (GlcNAc...) asparagine glycosylation sites follow: N177 and N198. N-linked (GlcNAc...) asparagine glycosylation occurs at N302. Y385 is subject to Sulfotyrosine. Residues 414 to 441 form a helical membrane-spanning segment; that stretch reads YKFLRIVVWFVSLLALLGNVFVLVILLT. The Cytoplasmic segment spans residues 442–450; it reads SHYKLTVPR. Residues 451-473 traverse the membrane as a helical segment; the sequence is FLMCNLAFADFCMGLYLLLIASV. Residues 474–494 lie on the Extracellular side of the membrane; the sequence is DLYTQSEYYNHAIDWQTGPGC. The cysteines at positions 494 and 569 are disulfide-linked. The chain crosses the membrane as a helical span at residues 495 to 517; that stretch reads NTAGFFTVFASELSVYTLTVITL. At 518–537 the chain is on the cytoplasmic side; the sequence is ERWYAITFAMHLDRKIRLWH. The helical transmembrane segment at 538–560 threads the bilayer; sequence AYVIMLGGWVCCFLLALLPLVGI. Residues 561 to 580 lie on the Extracellular side of the membrane; that stretch reads SSYAKVSICLPMDTETPLAL. The helical transmembrane segment at 581–602 threads the bilayer; it reads AYIILVLLLNIIAFIIVCACYV. The Cytoplasmic segment spans residues 603 to 625; that stretch reads KIYITVRNPHYNPGDKDTRIAKR. The chain crosses the membrane as a helical span at residues 626–649; that stretch reads MAVLIFTDFMCMAPISFYALSALM. Residues 650–660 are Extracellular-facing; it reads NKPLITVTNSK. A helical transmembrane segment spans residues 661–682; it reads ILLVLFYPLNSCANPFLYAIFT. Residues 683-764 are Cytoplasmic-facing; the sequence is KAFQRDVFML…TSKEYKQTVL (82 aa). The short motif at 762–764 is the PDZ-binding element; it reads TVL.

It belongs to the G-protein coupled receptor 1 family. FSH/LSH/TSH subfamily. Interacts with heterodimer GPHA2:GPHB5; this interaction stimulates cAMP production. Interacts (via the PDZ-binding motif) with SCRIB; regulates TSHR trafficking and function. Glycosylated. In terms of processing, sulfated. Sulfation on Tyr-385 plays a role in thyrotropin receptor binding and activation.

It is found in the cell membrane. Its subcellular location is the basolateral cell membrane. In terms of biological role, receptor for the thyroid-stimulating hormone (TSH) or thyrotropin. Also acts as a receptor for the heterodimeric glycoprotein hormone (GPHA2:GPHB5) or thyrostimulin. The activity of this receptor is mediated by G proteins which activate adenylate cyclase. Plays a central role in controlling thyroid cell metabolism. This chain is Thyrotropin receptor (TSHR), found in Ovis aries (Sheep).